We begin with the raw amino-acid sequence, 371 residues long: DNA primase large subunit PriL (371 aa).

Cysteine 230, cysteine 301, cysteine 310, and cysteine 317 together coordinate [4Fe-4S] cluster. Residues 337–371 form a disordered region; it reads EREKEEGKEKGNEEKKEKREEHEKKNEKGNEIKEK.

This sequence belongs to the eukaryotic-type primase large subunit family. In terms of assembly, heterodimer of a small subunit (PriS) and a large subunit (PriL). It depends on [4Fe-4S] cluster as a cofactor.

Functionally, regulatory subunit of DNA primase, an RNA polymerase that catalyzes the synthesis of short RNA molecules used as primers for DNA polymerase during DNA replication. Stabilizes and modulates the activity of the small subunit, increasing the rate of DNA synthesis, and conferring RNA synthesis capability. The DNA polymerase activity may enable DNA primase to also catalyze primer extension after primer synthesis. May also play a role in DNA repair. The polypeptide is DNA primase large subunit PriL (Methanosarcina acetivorans (strain ATCC 35395 / DSM 2834 / JCM 12185 / C2A)).